Reading from the N-terminus, the 538-residue chain is Atos homolog protein B (538 aa).

2 stretches are compositionally biased toward polar residues: residues 1–12 (MRHVQAETSPSS) and 129–141 (GGSSTSPWTSGAR). Disordered regions lie at residues 1 to 98 (MRHV…EPPT), 129 to 185 (GGSS…QLHT), and 201 to 303 (LVSG…PTDC). The segment covering 227-238 (HTPPGPGPPGPC) has biased composition (pro residues). A phosphoserine mark is found at Ser-254 and Ser-255. The tract at residues 348 to 430 (LLGNFEESLL…VPKVGTIQVT (83 aa)) is required for macropage invasion. The segment at 436 to 444 (QTVVKMFLV) is transactivation domain 1 (TAD1).

It belongs to the ATOS family.

The protein resides in the nucleus. Transcription regulator that may syncronize transcriptional and translational programs. The protein is Atos homolog protein B of Bos taurus (Bovine).